The sequence spans 107 residues: Large ribosomal subunit protein uL24 (107 aa).

Belongs to the universal ribosomal protein uL24 family. Part of the 50S ribosomal subunit.

Functionally, one of two assembly initiator proteins, it binds directly to the 5'-end of the 23S rRNA, where it nucleates assembly of the 50S subunit. In terms of biological role, one of the proteins that surrounds the polypeptide exit tunnel on the outside of the subunit. This chain is Large ribosomal subunit protein uL24, found in Coxiella burnetii (strain Dugway 5J108-111).